The primary structure comprises 602 residues: Protein SHORT-ROOT 1 (602 aa).

Positions 12–55 (AASEQQQQQQQSASYNSRSTTSSGSRSSSHQTNASYSYYHHSSN) are enriched in low complexity. Disordered stretches follow at residues 12–69 (AASE…YYYG), 101–145 (DFSS…TAAG), and 165–185 (DFSS…AVGG). Over residues 56 to 68 (SGGGGGGGGGYYY) the composition is skewed to gly residues. A compositionally biased stretch (low complexity) spans 122 to 145 (PPASSTPTGTAPTPPLSTSSTAAG). A compositionally biased stretch (gly residues) spans 173 to 185 (SGGGTASSGAVGG). In terms of domain architecture, GRAS spans 183–601 (VGGGGGGRWA…QPLVWASAWR (419 aa)). The interval 190–253 (RWASQLLLEC…LTASGPRTLR (64 aa)) is leucine repeat I (LRI). The interval 272-349 (ALRFQELSPW…PHLSITTVVS (78 aa)) is VHIID. A VHIID motif is present at residues 311–315 (FHILD). The tract at residues 365-401 (EIGQRMEKFARLMGVPFRFRAVHHSGDLAELDLDALD) is leucine repeat II (LRII). Positions 411-517 (LAVNCVNSLR…ERGAGRAIVD (107 aa)) are PFYRE. The tract at residues 520–601 (SCPASESMER…QPLVWASAWR (82 aa)) is SAW.

The protein belongs to the GRAS family. In terms of assembly, interacts with SCR1. Interacts with SMOS1. As to expression, expressed in leaves and roots. Detected in the stele, the endodermis and part of the cortex.

It localises to the nucleus. Functionally, transcription factor required for the asymmetric cell division involved in radial pattern formation in roots. Essential for both cell division and cell specification. In Oryza sativa subsp. japonica (Rice), this protein is Protein SHORT-ROOT 1.